The sequence spans 442 residues: Elongation factor 1-gamma (442 aa).

The 86-residue stretch at 2 to 87 (AAGTLYTYPE…YLSNDVLRGS (86 aa)) folds into the GST N-terminal domain. A GST C-terminal domain is found at 88-216 (TPQASAQVLQ…VKLCEKMAQF (129 aa)). Basic and acidic residues-rich tracts occupy residues 227 to 242 (KKEAPIKKEKGGKEGG) and 249 to 263 (QEKKEKKKEEKKAAP). Residues 227 to 273 (KKEAPIKKEKGGKEGGKQQPQQQEKKEKKKEEKKAAPAEEEMDECEA) form a disordered region. Residues 281–442 (AKDPFAHLPK…KPFNQGKIFK (162 aa)) form the EF-1-gamma C-terminal domain.

In terms of assembly, EF-1 is composed of four subunits: alpha, beta, delta, and gamma.

Functionally, probably plays a role in anchoring the complex to other cellular components. In Danio rerio (Zebrafish), this protein is Elongation factor 1-gamma (eef1g).